The sequence spans 578 residues: CTP synthase 2 (578 aa).

In terms of domain architecture, Glutamine amidotransferase type-1 spans Lys305–Asp564. Active-site for GATase activity residues include Cys404, His537, and Glu539.

This sequence belongs to the CTP synthase family. As to quaternary structure, homodimer. Oligomerizes to a tetramer in the presence of its substrates UTP and ATP. The cofactor is Mg(2+).

It localises to the cytoplasm. It carries out the reaction UTP + L-glutamine + ATP + H2O = CTP + L-glutamate + ADP + phosphate + 2 H(+). It functions in the pathway pyrimidine metabolism; CTP biosynthesis via de novo pathway; CTP from UDP: step 2/2. Activated by GTP. Subject to allosteric product inhibition by CTP. Inhibited by p-chloromercuriphenylsulfonic acid, N-ethylmaleimide and cyclopentenylcytosine (CPEC). Its function is as follows. Catalyzes the ATP-dependent amination of UTP to CTP with either L-glutamine or ammonia as the source of nitrogen. Plays an important role in the regulation of phospholipid synthesis. This is CTP synthase 2 (URA8) from Saccharomyces cerevisiae (strain YJM789) (Baker's yeast).